A 161-amino-acid polypeptide reads, in one-letter code: Probable calcium-binding protein CML16 (161 aa).

4 EF-hand domains span residues 8–43, 44–79, 83–118, and 119–154; these read DQIK…LGIK, PRGD…DINE, INQE…MGHP, and LTYR…SAAD. D21, D23, D25, S27, E32, D57, N59, N61, S63, E68, D96, D98, N100, S102, E107, D132, N134, D136, and E143 together coordinate Ca(2+).

Functionally, potential calcium sensor. The polypeptide is Probable calcium-binding protein CML16 (CML16) (Arabidopsis thaliana (Mouse-ear cress)).